We begin with the raw amino-acid sequence, 609 residues long: Zinc metalloproteinase-disintegrin-like (609 aa).

Positions M1–S20 are cleaved as a signal peptide. The propeptide occupies I21–A189. In terms of domain architecture, Peptidase M12B spans R198 to P393. Ca(2+) contacts are provided by E201 and D285. 3 disulfide bridges follow: C308–C388, C348–C372, and C350–C355. H333 contacts Zn(2+). The active site involves E334. The Zn(2+) site is built by H337 and H343. N371 carries N-linked (GlcNAc...) asparagine glycosylation. Ca(2+) is bound by residues C388, N391, V403, N406, L408, E410, E413, and D416. A Disintegrin domain is found at P401–N487. Cystine bridges form between C404–C433, C415–C428, C417–C423, C427–C450, C441–C447, C446–C472, C459–C479, C466–C498, C491–C503, C510–C560, C525–C571, C538–C548, C555–C597, and C591–C602. The D/ECD-tripeptide motif lies at E465–D467. 5 residues coordinate Ca(2+): D467, P468, E470, D482, and V483.

The protein belongs to the venom metalloproteinase (M12B) family. P-III subfamily. P-IIIa sub-subfamily. As to quaternary structure, monomer. Zn(2+) is required as a cofactor. Expressed by the venom gland.

It localises to the secreted. This protein is a zinc metalloprotease from snake venom that possesses hemorrhagic activity. The sequence is that of Zinc metalloproteinase-disintegrin-like from Crotalus durissus durissus (Central American rattlesnake).